Reading from the N-terminus, the 90-residue chain is MHDRCLKAWVTGRVQGVGFRAATRDQALTAGVTGYARNLPDGRVEVLLCGESSAVDRVVRWLWQGPPASRVTHVECEQAEDPPPGTFELG.

In terms of domain architecture, Acylphosphatase-like spans 5–90 (CLKAWVTGRV…DPPPGTFELG (86 aa)). Residues R20 and N38 contribute to the active site.

This sequence belongs to the acylphosphatase family.

It carries out the reaction an acyl phosphate + H2O = a carboxylate + phosphate + H(+). The polypeptide is Acylphosphatase (acyP) (Chromohalobacter salexigens (strain ATCC BAA-138 / DSM 3043 / CIP 106854 / NCIMB 13768 / 1H11)).